We begin with the raw amino-acid sequence, 248 residues long: UPF0736 protein BT9727_1080 (248 aa).

It belongs to the UPF0736 family.

The sequence is that of UPF0736 protein BT9727_1080 from Bacillus thuringiensis subsp. konkukian (strain 97-27).